A 480-amino-acid chain; its full sequence is Argininosuccinate lyase (480 aa).

Polar residues predominate over residues 1–17; the sequence is MTDTTPSADLGASSQQP. The tract at residues 1-24 is disordered; the sequence is MTDTTPSADLGASSQQPAKAWSGR.

It belongs to the lyase 1 family. Argininosuccinate lyase subfamily.

It is found in the cytoplasm. The catalysed reaction is 2-(N(omega)-L-arginino)succinate = fumarate + L-arginine. The protein operates within amino-acid biosynthesis; L-arginine biosynthesis; L-arginine from L-ornithine and carbamoyl phosphate: step 3/3. The chain is Argininosuccinate lyase from Azoarcus sp. (strain BH72).